A 1486-amino-acid polypeptide reads, in one-letter code: Chromosome partition protein MukB (1486 aa).

ATP is bound at residue 34–41; the sequence is GGNGAGKS. Coiled coils occupy residues 326-418, 444-480, and 509-603; these read LEAD…QYNQ, LETFQAKELEATEKMLSLEQKMSMAQTAHSQFEQAYQ, and RHLA…RAPV. A flexible hinge region spans residues 666-783; it reads PGGSEDQRLN…EVPLFGRAAR (118 aa). 3 coiled-coil regions span residues 835 to 923, 977 to 1115, and 1209 to 1266; these read EAEI…AKLE, EMLS…TAKA, and VEAI…QNVS.

This sequence belongs to the SMC family. MukB subfamily. In terms of assembly, homodimerization via its hinge domain. Binds to DNA via its C-terminal region. Interacts, and probably forms a ternary complex, with MukE and MukF via its C-terminal region. The complex formation is stimulated by calcium or magnesium. Interacts with tubulin-related protein FtsZ.

The protein localises to the cytoplasm. It is found in the nucleoid. Functionally, plays a central role in chromosome condensation, segregation and cell cycle progression. Functions as a homodimer, which is essential for chromosome partition. Involved in negative DNA supercoiling in vivo, and by this means organize and compact chromosomes. May achieve or facilitate chromosome segregation by condensation DNA from both sides of a centrally located replisome during cell division. This Shigella boydii serotype 4 (strain Sb227) protein is Chromosome partition protein MukB.